Consider the following 124-residue polypeptide: Fluoride-specific ion channel FluC (124 aa).

The next 4 helical transmembrane spans lie at 1-21, 35-55, 68-88, and 99-119; these read MGVVFAVALGGAIGSALRFLL, VGTLFVNLVGAFFIGFFFAYL, LLITGLLGGLTTFSTYSYESF, and FLAYTLGTNVLGIFFTFLGYI. Residues G75 and T78 each coordinate Na(+).

This sequence belongs to the fluoride channel Fluc/FEX (TC 1.A.43) family.

The protein localises to the cell inner membrane. It carries out the reaction fluoride(in) = fluoride(out). With respect to regulation, na(+) is not transported, but it plays an essential structural role and its presence is essential for fluoride channel function. In terms of biological role, fluoride-specific ion channel. Important for reducing fluoride concentration in the cell, thus reducing its toxicity. In Aquifex aeolicus (strain VF5), this protein is Fluoride-specific ion channel FluC.